Reading from the N-terminus, the 1068-residue chain is Tricorn protease homolog (1068 aa).

A six-bladed beta propeller region spans residues 61 to 326; it reads MKAYYMYPDI…DSLTKLDINL (266 aa). A seven-bladed beta propeller region spans residues 338-686; the sequence is VNVMEYMNEA…RKGGVIDLSR (349 aa). A C-1 region spans residues 692–762; the sequence is EPEKEWRQML…RTSHSYETAY (71 aa). Catalysis depends on histidine 756, which acts as the Charge relay system. The tract at residues 771 to 864 is PDZ-like; that stretch reads SVGGLGAEFE…RVTVKVLKDE (94 aa). Positions 865 to 1068 are C-2; sequence RFLIYRYWVE…TAIELALKQL (204 aa). Glycine 927 serves as a coordination point for substrate. The active-site Nucleophile is the serine 974. Glutamate 1032 functions as the Charge relay system in the catalytic mechanism.

It belongs to the peptidase S41B family.

The protein localises to the cytoplasm. Degrades oligopeptides in a sequential manner. The sequence is that of Tricorn protease homolog (tri) from Saccharolobus solfataricus (strain ATCC 35092 / DSM 1617 / JCM 11322 / P2) (Sulfolobus solfataricus).